The chain runs to 83 residues: Normal mucosa of esophagus-specific gene 1 protein (83 aa).

This sequence belongs to the complex I NDUFA4 subunit family.

Its subcellular location is the nucleus. This is Normal mucosa of esophagus-specific gene 1 protein (Nmes1) from Rattus norvegicus (Rat).